The sequence spans 147 residues: Endoribonuclease YbeY (147 aa).

3 residues coordinate Zn(2+): histidine 107, histidine 111, and histidine 117.

The protein belongs to the endoribonuclease YbeY family. The cofactor is Zn(2+).

It localises to the cytoplasm. In terms of biological role, single strand-specific metallo-endoribonuclease involved in late-stage 70S ribosome quality control and in maturation of the 3' terminus of the 16S rRNA. This is Endoribonuclease YbeY from Solibacter usitatus (strain Ellin6076).